The primary structure comprises 415 residues: MVWNRSLAETDPEIARAIALEITRQGAKLELIASENFVSRAVLEAQGSVLTNKYAEGYPGARYYGGCEYVDIVESVAIRRAKEIFGAGHANVQPHSGAQANMAAYFAFLEPGDTIMGMRLAHGGHLTHGAKINFSGRYFRYVPYGVEEETGRIDYDRMHAIAREHRPKLIVGGASAYPRELDFARMRAIADDVGALLMIDMAHIAGLIAAGLHMSPVPYADVVTTTTHKTLRGPRGGMILCPEEYAAAIDKAVFPGIQGGPLMHVIAAKAVALGEAQRPEFKTYQEQIVKNARALAQALQERGFELVAGGTDTHLILVDLRNKGLTGAVAEDLLDRVDVTVNKNMVPFDPQPPRVTSGIRIGTPAVTTRGMKEDSMVQIAEVISLTLDHPEEGAVQARAKAIVAELCAAHPFLKL.

Residues Leu-120 and Gly-124–Leu-126 each bind (6S)-5,6,7,8-tetrahydrofolate. Lys-229 is modified (N6-(pyridoxal phosphate)lysine).

The protein belongs to the SHMT family. In terms of assembly, homodimer. Pyridoxal 5'-phosphate is required as a cofactor.

It is found in the cytoplasm. The enzyme catalyses (6R)-5,10-methylene-5,6,7,8-tetrahydrofolate + glycine + H2O = (6S)-5,6,7,8-tetrahydrofolate + L-serine. It functions in the pathway one-carbon metabolism; tetrahydrofolate interconversion. Its pathway is amino-acid biosynthesis; glycine biosynthesis; glycine from L-serine: step 1/1. Functionally, catalyzes the reversible interconversion of serine and glycine with tetrahydrofolate (THF) serving as the one-carbon carrier. This reaction serves as the major source of one-carbon groups required for the biosynthesis of purines, thymidylate, methionine, and other important biomolecules. Also exhibits THF-independent aldolase activity toward beta-hydroxyamino acids, producing glycine and aldehydes, via a retro-aldol mechanism. The chain is Serine hydroxymethyltransferase from Desulforudis audaxviator (strain MP104C).